Here is a 1009-residue protein sequence, read N- to C-terminus: Protein-tyrosine kinase 2-beta (1009 aa).

In terms of domain architecture, FERM spans 39-359; it reads RILKVCFYSN…GYCRLQGEHK (321 aa). Residues S361, S375, and S399 each carry the phosphoserine modification. Y402 is modified (phosphotyrosine; by autocatalysis). The 259-residue stretch at 425–683 folds into the Protein kinase domain; it reads VVLNRILGEG…ELVCSLSDIY (259 aa). Residues 431-439, K457, and 503-509 contribute to the ATP site; these read LGEGFFGEV and ELYPYGE. D549 (proton acceptor) is an active-site residue. Y579, Y580, and Y722 each carry phosphotyrosine. The interval 702 to 725 is disordered; sequence PKILEPTAFQEPPPKPSRPKYKHP. S762 is subject to Phosphoserine. At T765 the chain carries Phosphothreonine. Residues 801-1009 are interaction with TGFB1I1; it reads KIKMRQVLDR…VANLAHPPAE (209 aa). Y834 is subject to Phosphotyrosine. The residue at position 839 (S839) is a Phosphoserine. Phosphothreonine is present on T842. Y849 carries the post-translational modification Phosphotyrosine. S866 carries the phosphoserine modification. Residues 868–1009 are focal adhesion targeting (FAT); that stretch reads QPTANLDRTD…VANLAHPPAE (142 aa). Y881 is subject to Phosphotyrosine.

It belongs to the protein kinase superfamily. Tyr protein kinase family. FAK subfamily. As to quaternary structure, homodimer, or homooligomer. Interacts with NPHP1, ASAP1, ASAP2, ARHGAP26, SKAP2 and TGFB1I1. The Tyr-402 phosphorylated form interacts with SRC (via SH2 domain) and SRC family members. Forms a signaling complex with EPHA1, LCK and phosphatidylinositol 3-kinase; upon activation by EFNA1. Interacts with GRB2 (via SH2 domain). Interacts with P53/TP53 and MDM2. Interacts with MYLK. Interacts with BCAR1. Interacts with RB1CC1. Interacts with RHOU. Interacts with VAV1. Interacts with PDPK1. Interacts with LPXN and PTPN12. Interacts with SIRPA and SH2D3C. Interacts (hypophosphorylated) with PXN. Interacts with ARHGAP10. Interacts with KCNA2. Post-translationally, phosphorylated on tyrosine residues in response to various stimuli that elevate the intracellular calcium concentration; this activation is indirect and may be mediated by production of reactive oxygen species (ROS). Tyr-402 is the major autophosphorylation site, but other kinases can also phosphorylate Tyr-402. Autophosphorylation occurs in trans, i.e. one subunit of the dimeric receptor phosphorylates tyrosine residues on the other subunit. Phosphorylation at Tyr-402 promotes interaction with SRC and SRC family members, leading to phosphorylation at Tyr-579; Tyr-580 and Tyr-881. Phosphorylation at Tyr-881 is important for interaction with GRB2. Phosphorylated on tyrosine residues upon activation of FGR and PKC. Recruitment by NPHP1 to cell matrix adhesions initiates Tyr-402 phosphorylation. In monocytes, adherence to substrata is required for tyrosine phosphorylation and kinase activation. Angiotensin II, thapsigargin and L-alpha-lysophosphatidic acid (LPA) also induce autophosphorylation and increase kinase activity. Phosphorylation by MYLK promotes ITGB2 activation and is thus essential to trigger neutrophil transmigration during lung injury. Dephosphorylated by PTPN12. In terms of tissue distribution, highly expressed in pulmonary vein endothelial cells, lung and brain (at protein level). Isoform 1 is expressed at high levels in the brain (hippocampus, cerebral cortex and olfactory bulb) and poorly in the spleen and other tissues, whereas isoforms 2 and 3 are expressed in the spleen and brain (highest in cerebellum).

Its subcellular location is the cytoplasm. The protein localises to the perinuclear region. It localises to the cell membrane. The protein resides in the cell projection. It is found in the lamellipodium. Its subcellular location is the cell cortex. The protein localises to the nucleus. It localises to the cell junction. The protein resides in the focal adhesion. It carries out the reaction L-tyrosyl-[protein] + ATP = O-phospho-L-tyrosyl-[protein] + ADP + H(+). Its activity is regulated as follows. Activated in response to stimuli that lead to increased intracellular Ca(2+) levels; this activation is indirect and may be mediated by calcium-mediated production of reactive oxygen species (ROS). Activated by autophosphorylation at Tyr-402; this creates a binding site for SRC family kinases and leads to phosphorylation at additional tyrosine residues. Phosphorylation at Tyr-402, Tyr-579 and Tyr-580 is required for optimal kinase activity. Its function is as follows. Non-receptor protein-tyrosine kinase that regulates reorganization of the actin cytoskeleton, cell polarization, cell migration, adhesion, spreading and bone remodeling. Plays a role in the regulation of the humoral immune response, and is required for normal levels of marginal B-cells in the spleen and normal migration of splenic B-cells. Required for normal macrophage polarization and migration towards sites of inflammation. Regulates cytoskeleton rearrangement and cell spreading in T-cells, and contributes to the regulation of T-cell responses. Promotes osteoclastic bone resorption; this requires both PTK2B/PYK2 and SRC. May inhibit differentiation and activity of osteoprogenitor cells. Functions in signaling downstream of integrin and collagen receptors, immune receptors, G-protein coupled receptors (GPCR), cytokine, chemokine and growth factor receptors, and mediates responses to cellular stress. Forms multisubunit signaling complexes with SRC and SRC family members upon activation; this leads to the phosphorylation of additional tyrosine residues, creating binding sites for scaffold proteins, effectors and substrates. Regulates numerous signaling pathways. Promotes activation of phosphatidylinositol 3-kinase and of the AKT1 signaling cascade. Promotes activation of NOS3. Regulates production of the cellular messenger cGMP. Promotes activation of the MAP kinase signaling cascade, including activation of MAPK1/ERK2, MAPK3/ERK1 and MAPK8/JNK1. Promotes activation of Rho family GTPases, such as RHOA and RAC1. Recruits the ubiquitin ligase MDM2 to P53/TP53 in the nucleus, and thereby regulates P53/TP53 activity, P53/TP53 ubiquitination and proteasomal degradation. Acts as a scaffold, binding to both PDPK1 and SRC, thereby allowing SRC to phosphorylate PDPK1 at 'Tyr-9, 'Tyr-373', and 'Tyr-376'. Promotes phosphorylation of NMDA receptors by SRC family members, and thereby contributes to the regulation of NMDA receptor ion channel activity and intracellular Ca(2+) levels. May also regulate potassium ion transport by phosphorylation of potassium channel subunits. Phosphorylates SRC; this increases SRC kinase activity. Phosphorylates ASAP1, NPHP1, KCNA2 and SHC1. Promotes phosphorylation of ASAP2, RHOU and PXN; this requires both SRC and PTK2/PYK2. This Rattus norvegicus (Rat) protein is Protein-tyrosine kinase 2-beta (Ptk2b).